A 211-amino-acid polypeptide reads, in one-letter code: DNA dC-&gt;dU-editing enzyme APOBEC-3H (211 aa).

The region spanning L4–L126 is the CMP/dCMP-type deaminase domain. H54 lines the Zn(2+) pocket. The active-site Proton donor is E56. Positions 85 and 88 each coordinate Zn(2+).

It belongs to the cytidine and deoxycytidylate deaminase family. Homodimer. The cofactor is Zn(2+).

It is found in the cytoplasm. The catalysed reaction is a 2'-deoxycytidine in single-stranded DNA + H2O + H(+) = a 2'-deoxyuridine in single-stranded DNA + NH4(+). In terms of biological role, DNA deaminase (cytidine deaminase) which may act as an inhibitor of retrovirus replication and retrotransposon mobility via deaminase-dependent and -independent mechanisms. The chain is DNA dC-&gt;dU-editing enzyme APOBEC-3H from Pongo pygmaeus (Bornean orangutan).